The primary structure comprises 222 residues: Urease accessory protein UreF (222 aa).

The protein belongs to the UreF family. In terms of assembly, ureD, UreF and UreG form a complex that acts as a GTP-hydrolysis-dependent molecular chaperone, activating the urease apoprotein by helping to assemble the nickel containing metallocenter of UreC. The UreE protein probably delivers the nickel.

Its subcellular location is the cytoplasm. Required for maturation of urease via the functional incorporation of the urease nickel metallocenter. This chain is Urease accessory protein UreF, found in Hahella chejuensis (strain KCTC 2396).